Consider the following 490-residue polypeptide: Subtilisin-like protease 8 (490 aa).

An N-terminal signal peptide occupies residues 1–26 (MKGLLSLSVLPVLAYASPMIVDSIHQ). Residues 27–134 (DAAPILSSTN…YIERDSEVRA (108 aa)) constitute a propeptide that is removed on maturation. The 91-residue stretch at 43–133 (SYIVVFKKGV…EYIERDSEVR (91 aa)) folds into the Inhibitor I9 domain. A Peptidase S8 domain is found at 144 to 450 (PWGLARISHR…GGSDNYKEIV (307 aa)). Residues D180 and H212 each act as charge relay system in the active site. N-linked (GlcNAc...) asparagine glycosylation is present at N282. Residue S378 is the Charge relay system of the active site. Residue N455 is glycosylated (N-linked (GlcNAc...) asparagine).

It belongs to the peptidase S8 family.

The protein localises to the secreted. Secreted subtilisin-like serine protease with keratinolytic activity that contributes to pathogenicity. The chain is Subtilisin-like protease 8 (SUB8) from Arthroderma otae (strain ATCC MYA-4605 / CBS 113480) (Microsporum canis).